Consider the following 132-residue polypeptide: L-ectoine synthase (132 aa).

Belongs to the ectoine synthase family.

The enzyme catalyses (2S)-4-acetamido-2-aminobutanoate = L-ectoine + H2O. It participates in amine and polyamine biosynthesis; ectoine biosynthesis; L-ectoine from L-aspartate 4-semialdehyde: step 3/3. In terms of biological role, catalyzes the circularization of gamma-N-acetyl-alpha,gamma-diaminobutyric acid (ADABA) to ectoine (1,4,5,6-tetrahydro-2-methyl-4-pyrimidine carboxylic acid), which is an excellent osmoprotectant. This is L-ectoine synthase from Rhodococcus opacus (strain B4).